A 258-amino-acid chain; its full sequence is Trypsin eta (258 aa).

Positions 1 to 22 (MNKVILRILALLFLLGIGAVSA) are cleaved as a signal peptide. The propeptide at 23–27 (QPDGR) is activation peptide. Residues 28 to 258 (IVGGADTTNY…YFKDWIASRV (231 aa)) form the Peptidase S1 domain. Cys-59 and Cys-75 form a disulfide bridge. Catalysis depends on charge relay system residues His-74 and Asp-120. 2 disulfides stabilise this stretch: Cys-185/Cys-200 and Cys-211/Cys-235. Ser-215 (charge relay system) is an active-site residue.

This sequence belongs to the peptidase S1 family.

The protein localises to the secreted. It is found in the extracellular space. The enzyme catalyses Preferential cleavage: Arg-|-Xaa, Lys-|-Xaa.. The sequence is that of Trypsin eta (etaTry) from Drosophila erecta (Fruit fly).